Consider the following 338-residue polypeptide: Phenylalanine--tRNA ligase alpha subunit (338 aa).

Glu259 is a binding site for Mg(2+).

Belongs to the class-II aminoacyl-tRNA synthetase family. Phe-tRNA synthetase alpha subunit type 1 subfamily. Tetramer of two alpha and two beta subunits. Mg(2+) is required as a cofactor.

It is found in the cytoplasm. The catalysed reaction is tRNA(Phe) + L-phenylalanine + ATP = L-phenylalanyl-tRNA(Phe) + AMP + diphosphate + H(+). In Herminiimonas arsenicoxydans, this protein is Phenylalanine--tRNA ligase alpha subunit.